Reading from the N-terminus, the 238-residue chain is MDYQNQKSNENKHGEKLMMKNRSKFVGVRQRASGKWAAEIKDTSKNIRMWLGTYKTAEEAARAYDEAAFLLRGTNTRTNFSTTHSIPTNSPISLKLKNLLHRKSISNLSQSKNQCTLMSSSLQGAPIDNSIMVMENENKSSCSSEESKSLFWVQNQLVSEYNPYGVDMNMMNCSIGITPNTLQIDYSWPLPQQRINELPTLNDSVNVYGMNECYVEGTYESKYEYDVNYPLSHLFCFT.

Positions 24–81 form a DNA-binding region, AP2/ERF; sequence KFVGVRQRASGKWAAEIKDTSKNIRMWLGTYKTAEEAARAYDEAAFLLRGTNTRTNFS.

The protein belongs to the AP2/ERF transcription factor family. ERF subfamily. Expressed in roots, root hairs and leaves.

It is found in the nucleus. In terms of biological role, transcription factor involved in symbiotic nodule signaling in response to rhizobial Nod factors (NFs). Binds to the GCC box (NF-responsive box) of ENOD11 promoter. May act as transcriptional repressor of NF-responsive box-containing target gene promoters in root hairs. The protein is Ethylene-responsive transcription factor ERN3 of Medicago truncatula (Barrel medic).